Reading from the N-terminus, the 338-residue chain is Glycerol-3-phosphate dehydrogenase [NAD(P)+] (338 aa).

NADPH is bound by residues Trp14, Tyr50, and Lys110. Sn-glycerol 3-phosphate is bound by residues Lys110, Gly141, and Ser143. Residue Ala145 coordinates NADPH. Lys196, Asp249, Ser259, Arg260, and Asn261 together coordinate sn-glycerol 3-phosphate. Lys196 functions as the Proton acceptor in the catalytic mechanism. Arg260 provides a ligand contact to NADPH. Glu285 lines the NADPH pocket.

It belongs to the NAD-dependent glycerol-3-phosphate dehydrogenase family.

It is found in the cytoplasm. The catalysed reaction is sn-glycerol 3-phosphate + NAD(+) = dihydroxyacetone phosphate + NADH + H(+). The enzyme catalyses sn-glycerol 3-phosphate + NADP(+) = dihydroxyacetone phosphate + NADPH + H(+). It functions in the pathway membrane lipid metabolism; glycerophospholipid metabolism. In terms of biological role, catalyzes the reduction of the glycolytic intermediate dihydroxyacetone phosphate (DHAP) to sn-glycerol 3-phosphate (G3P), the key precursor for phospholipid synthesis. The polypeptide is Glycerol-3-phosphate dehydrogenase [NAD(P)+] (Malacoplasma penetrans (strain HF-2) (Mycoplasma penetrans)).